A 105-amino-acid chain; its full sequence is MNAGQPTLAAYLILGAMLFSIGVVGVFLNRKNVIILLMAIELLLLAVNINLVAFSRYLGNLDGQVFVFFILTVAAAEAAIGLAILVAYFRNRHSINVDDIDELRG.

A run of 3 helical transmembrane segments spans residues 8-28 (LAAYLILGAMLFSIGVVGVFL), 34-54 (IILLMAIELLLLAVNINLVAF), and 65-85 (VFVFFILTVAAAEAAIGLAIL).

The protein belongs to the complex I subunit 4L family. As to quaternary structure, NDH-1 is composed of 14 different subunits. Subunits NuoA, H, J, K, L, M, N constitute the membrane sector of the complex.

It localises to the cell inner membrane. The enzyme catalyses a quinone + NADH + 5 H(+)(in) = a quinol + NAD(+) + 4 H(+)(out). NDH-1 shuttles electrons from NADH, via FMN and iron-sulfur (Fe-S) centers, to quinones in the respiratory chain. The immediate electron acceptor for the enzyme in this species is believed to be ubiquinone. Couples the redox reaction to proton translocation (for every two electrons transferred, four hydrogen ions are translocated across the cytoplasmic membrane), and thus conserves the redox energy in a proton gradient. This Acidithiobacillus ferrooxidans (strain ATCC 23270 / DSM 14882 / CIP 104768 / NCIMB 8455) (Ferrobacillus ferrooxidans (strain ATCC 23270)) protein is NADH-quinone oxidoreductase subunit K.